Here is a 332-residue protein sequence, read N- to C-terminus: Fructose-1,6-bisphosphatase class 1 (332 aa).

Mg(2+) is bound by residues Glu-94, Asp-116, Leu-118, and Asp-119. Substrate is bound by residues 119–122, Asn-211, Tyr-239, 257–259, and Lys-269; these read DGSS and YLY. Glu-275 serves as a coordination point for Mg(2+).

This sequence belongs to the FBPase class 1 family. In terms of assembly, homotetramer. Mg(2+) is required as a cofactor.

The protein localises to the cytoplasm. It catalyses the reaction beta-D-fructose 1,6-bisphosphate + H2O = beta-D-fructose 6-phosphate + phosphate. It functions in the pathway carbohydrate biosynthesis; Calvin cycle. This Synechococcus sp. (strain JA-2-3B'a(2-13)) (Cyanobacteria bacterium Yellowstone B-Prime) protein is Fructose-1,6-bisphosphatase class 1.